Reading from the N-terminus, the 276-residue chain is Formamidopyrimidine-DNA glycosylase (276 aa).

Catalysis depends on Pro-2, which acts as the Schiff-base intermediate with DNA. Glu-3 (proton donor) is an active-site residue. The active-site Proton donor; for beta-elimination activity is the Lys-58. Residues His-92, Arg-111, and Arg-153 each contribute to the DNA site. The segment at 238–272 (TVYGRERQNCLNCSSTIIKTKHSGRSTFYCRTCQY) adopts an FPG-type zinc-finger fold. Residue Arg-262 is the Proton donor; for delta-elimination activity of the active site.

This sequence belongs to the FPG family. In terms of assembly, monomer. Zn(2+) serves as cofactor.

The catalysed reaction is Hydrolysis of DNA containing ring-opened 7-methylguanine residues, releasing 2,6-diamino-4-hydroxy-5-(N-methyl)formamidopyrimidine.. The enzyme catalyses 2'-deoxyribonucleotide-(2'-deoxyribose 5'-phosphate)-2'-deoxyribonucleotide-DNA = a 3'-end 2'-deoxyribonucleotide-(2,3-dehydro-2,3-deoxyribose 5'-phosphate)-DNA + a 5'-end 5'-phospho-2'-deoxyribonucleoside-DNA + H(+). In terms of biological role, involved in base excision repair of DNA damaged by oxidation or by mutagenic agents. Acts as a DNA glycosylase that recognizes and removes damaged bases. Has a preference for oxidized purines, such as 7,8-dihydro-8-oxoguanine (8-oxoG). Has AP (apurinic/apyrimidinic) lyase activity and introduces nicks in the DNA strand. Cleaves the DNA backbone by beta-delta elimination to generate a single-strand break at the site of the removed base with both 3'- and 5'-phosphates. This chain is Formamidopyrimidine-DNA glycosylase, found in Rickettsia felis (strain ATCC VR-1525 / URRWXCal2) (Rickettsia azadi).